A 177-amino-acid polypeptide reads, in one-letter code: Antigen TyF1 (177 aa).

Belongs to the Dps family. As to quaternary structure, homodecamer.

The sequence is that of Antigen TyF1 from Treponema pallidum subsp. pertenue (Yaws treponeme).